A 354-amino-acid chain; its full sequence is Ion-translocating oxidoreductase complex subunit D (354 aa).

Transmembrane regions (helical) follow at residues 9–28, 67–87, and 117–137; these read IMLH…LYLF, LLSG…WIAV, and VALL…LPLG. FMN phosphoryl threonine is present on Thr-165. A run of 5 helical transmembrane segments spans residues 200 to 220, 222 to 242, 249 to 269, 277 to 297, and 301 to 321; these read GSLG…LLAL, IIHW…AALA, VHGG…ALFI, PISR…VFVI, and GNFP…VPLI.

Belongs to the NqrB/RnfD family. In terms of assembly, the complex is composed of six subunits: RnfA, RnfB, RnfC, RnfD, RnfE and RnfG. It depends on FMN as a cofactor.

It localises to the cell inner membrane. Functionally, part of a membrane-bound complex that couples electron transfer with translocation of ions across the membrane. This chain is Ion-translocating oxidoreductase complex subunit D, found in Stutzerimonas stutzeri (Pseudomonas stutzeri).